Reading from the N-terminus, the 216-residue chain is Small ribosomal subunit protein uS3c (216 aa).

One can recognise a KH type-2 domain in the interval 43–115 (FENDWGTLYN…QTRIKVIQVN (73 aa)).

It belongs to the universal ribosomal protein uS3 family. As to quaternary structure, part of the 30S ribosomal subunit.

It is found in the plastid. It localises to the chloroplast. This chain is Small ribosomal subunit protein uS3c (rps3), found in Emiliania huxleyi (Coccolithophore).